The following is a 162-amino-acid chain: NADH-quinone oxidoreductase subunit I (162 aa).

2 4Fe-4S ferredoxin-type domains span residues 53–83 and 93–122; these read LRRYPNGEERCIACKLCEAVCPALAITIESE and TRYDIDLTKCIFCGFCEESCPVDSIVETHI. Residues C63, C66, C69, C73, C102, C105, C108, and C112 each coordinate [4Fe-4S] cluster.

This sequence belongs to the complex I 23 kDa subunit family. In terms of assembly, NDH-1 is composed of 14 different subunits. Subunits NuoA, H, J, K, L, M, N constitute the membrane sector of the complex. It depends on [4Fe-4S] cluster as a cofactor.

It localises to the cell inner membrane. It carries out the reaction a quinone + NADH + 5 H(+)(in) = a quinol + NAD(+) + 4 H(+)(out). NDH-1 shuttles electrons from NADH, via FMN and iron-sulfur (Fe-S) centers, to quinones in the respiratory chain. The immediate electron acceptor for the enzyme in this species is believed to be ubiquinone. Couples the redox reaction to proton translocation (for every two electrons transferred, four hydrogen ions are translocated across the cytoplasmic membrane), and thus conserves the redox energy in a proton gradient. The chain is NADH-quinone oxidoreductase subunit I from Bordetella bronchiseptica (strain ATCC BAA-588 / NCTC 13252 / RB50) (Alcaligenes bronchisepticus).